A 153-amino-acid polypeptide reads, in one-letter code: Insulin-like growth factor 1 (153 aa).

The interval 49 to 77 is b; it reads GPETLCGAELVDALQFVCGDRGFYFNKPT. Intrachain disulfides connect cysteine 54-cysteine 96, cysteine 66-cysteine 109, and cysteine 95-cysteine 100. The tract at residues 78 to 89 is c; it reads GYGSSSRRAPQT. Residues 90–110 are a; sequence GIVDECCFRSCDLRRLEMYCA. Residues 111–118 are d; the sequence is PLKPAKSA. A propeptide spans 119-153 (e peptide); the sequence is RSVRAQRHTDMPKAQKEVHLKNASRGSAGNKNYRM. Residues 120–153 are disordered; that stretch reads SVRAQRHTDMPKAQKEVHLKNASRGSAGNKNYRM. A compositionally biased stretch (basic and acidic residues) spans 125 to 138; sequence RHTDMPKAQKEVHL. Residues 142-153 show a composition bias toward polar residues; it reads SRGSAGNKNYRM.

This sequence belongs to the insulin family. As to quaternary structure, forms a ternary complex with IGFR1 and ITGAV:ITGB3. Forms a ternary complex with IGFR1 and ITGA6:ITGB4. Forms a ternary complex with IGFBP3 and ALS.

Its subcellular location is the secreted. Its function is as follows. The insulin-like growth factors, isolated from plasma, are structurally and functionally related to insulin but have a much higher growth-promoting activity. May be a physiological regulator of [1-14C]-2-deoxy-D-glucose (2DG) transport and glycogen synthesis in osteoblasts. Stimulates glucose transport in bone-derived osteoblastic (PyMS) cells and is effective at much lower concentrations than insulin, not only regarding glycogen and DNA synthesis but also with regard to enhancing glucose uptake. May play a role in synapse maturation. Ca(2+)-dependent exocytosis of IGF1 is required for sensory perception of smell in the olfactory bulb. Acts as a ligand for IGF1R. Binds to the alpha subunit of IGF1R, leading to the activation of the intrinsic tyrosine kinase activity which autophosphorylates tyrosine residues in the beta subunit thus initiating a cascade of down-stream signaling events leading to activation of the PI3K-AKT/PKB and the Ras-MAPK pathways. Binds to integrins ITGAV:ITGB3 and ITGA6:ITGB4. Its binding to integrins and subsequent ternary complex formation with integrins and IGFR1 are essential for IGF1 signaling. Induces the phosphorylation and activation of IGFR1, MAPK3/ERK1, MAPK1/ERK2 and AKT1. As part of the MAPK/ERK signaling pathway, acts as a negative regulator of apoptosis in cardiomyocytes via promotion of STUB1/CHIP-mediated ubiquitination and degradation of ICER-type isoforms of CREM. The sequence is that of Insulin-like growth factor 1 from Canis lupus familiaris (Dog).